Here is a 617-residue protein sequence, read N- to C-terminus: Tetratricopeptide repeat protein 39B (617 aa).

3 TPR repeats span residues S328 to W361, C520 to L553, and P561 to Y594.

It belongs to the TTC39 family. As to expression, high expression in lung and spleen. Low lower expression in liver and small intestine. Weak expression in heart, brain, kidney, adipose, and adrenal gland.

Functionally, regulates high density lipoprotein (HDL) cholesterol metabolism by promoting the ubiquitination and degradation of the oxysterols receptors LXR (NR1H2 and NR1H3). This is Tetratricopeptide repeat protein 39B from Mus musculus (Mouse).